Here is a 157-residue protein sequence, read N- to C-terminus: Transcription elongation factor GreA (157 aa).

Residues 25-43 show a composition bias toward basic and acidic residues; sequence EGRAKVAEQLSEARDKGDL. Residues 25–47 are disordered; sequence EGRAKVAEQLSEARDKGDLSENA. Residues 43–79 are a coiled coil; the sequence is LSENAEYDAAKEAQEILERRIAKLEELMINARVINKD.

This sequence belongs to the GreA/GreB family.

In terms of biological role, necessary for efficient RNA polymerase transcription elongation past template-encoded arresting sites. The arresting sites in DNA have the property of trapping a certain fraction of elongating RNA polymerases that pass through, resulting in locked ternary complexes. Cleavage of the nascent transcript by cleavage factors such as GreA or GreB allows the resumption of elongation from the new 3'terminus. GreA releases sequences of 2 to 3 nucleotides. This is Transcription elongation factor GreA from Amoebophilus asiaticus (strain 5a2).